The chain runs to 563 residues: Quinidine resistance protein 1 (563 aa).

A compositionally biased stretch (polar residues) spans 1 to 10 (MTKQQTSVMR). Residues 1–50 (MTKQQTSVMRNASIAKEEREGSDNNNVDRSSSDAISDNDAERSNSHSEID) are disordered. Residues 1–75 (MTKQQTSVMR…KQKMLLVVQC (75 aa)) lie on the Cytoplasmic side of the membrane. Positions 23-33 (DNNNVDRSSSD) are enriched in low complexity. Residues 39–49 (DAERSNSHSEI) show a composition bias toward basic and acidic residues. A helical membrane pass occupies residues 76-96 (AFTGFFSTVAGSIYYPVLTII). Topologically, residues 97–108 (ERKFNITEELAN) are extracellular. A helical membrane pass occupies residues 109–129 (VTIVVYFIFQGVAPSIMGGLA). The Cytoplasmic portion of the chain corresponds to 130–135 (DTFGRR). Residues 136–156 (PIVLWAILAYFCACIGLACAH) traverse the membrane as a helical segment. Topologically, residues 157 to 165 (NYAQILALR) are extracellular. The helical transmembrane segment at 166–186 (CLQAAGISPVIAINSGIMGDV) threads the bilayer. Topologically, residues 187–195 (TTKVERGGY) are cytoplasmic. Residues 196–216 (VGLVAGFQVVGTAFGALIGAG) traverse the membrane as a helical segment. Residues 217–224 (LSSKWGWR) are Extracellular-facing. Residues 225 to 245 (AIFWFLAIGSGICLVFSTLLM) traverse the membrane as a helical segment. Residues 246 to 296 (PETKRTLVGNGSVTPRSFLNRSLILHVGSVKKTLHLDDPDPETLEPRTSVD) lie on the Cytoplasmic side of the membrane. A helical membrane pass occupies residues 297 to 317 (FLAPLKILHIREIDILLSIAG). Over 318 to 341 (LQFSTWTTHQTALTIVLSKKYNLS) the chain is Extracellular. The helical transmembrane segment at 342-362 (VAKIGLCFLPAGISTLTSIIS) threads the bilayer. At 363 to 421 (AGRYLNWSYRTRKVKYNRWIKEQELQLMEKYKGDKNKVAELIHSNSHYAFNLVEARLHP) the chain is on the cytoplasmic side. Residues 422–442 (AFVTLLLSSIGFTAFGWCISV) traverse the membrane as a helical segment. Residues 443 to 445 (KTP) lie on the Extracellular side of the membrane. A helical membrane pass occupies residues 446–466 (LAAVLCTSAFASLFSNCILTF). The Cytoplasmic portion of the chain corresponds to 467–481 (STTLIVDLFPSKAST). The helical transmembrane segment at 482–502 (ATGCLNLFRCLLSAIFIAALT) threads the bilayer. The Extracellular segment spans residues 503–511 (KMVEKMRYG). The chain crosses the membrane as a helical span at residues 512 to 532 (GVFTFLSAITSSSSLLLFYLL). Residues 533–563 (KNGKQLSFDRIRANDKSAGRSVGKNSEKVST) are Cytoplasmic-facing.

It belongs to the major facilitator superfamily. CAR1 family.

Its subcellular location is the cell membrane. Functionally, multidrug resistance transporter involved in resistance and adaptation to quinidine and ketoconazole. This is Quinidine resistance protein 1 (QDR1) from Saccharomyces cerevisiae (strain ATCC 204508 / S288c) (Baker's yeast).